Consider the following 356-residue polypeptide: UDP-N-acetylglucosamine--N-acetylmuramyl-(pentapeptide) pyrophosphoryl-undecaprenol N-acetylglucosamine transferase (356 aa).

The UDP-N-acetyl-alpha-D-glucosamine site is built by Arg-166, Ser-196, and Gln-290.

It belongs to the glycosyltransferase 28 family. MurG subfamily.

It localises to the cell membrane. It catalyses the reaction Mur2Ac(oyl-L-Ala-gamma-D-Glu-L-Lys-D-Ala-D-Ala)-di-trans,octa-cis-undecaprenyl diphosphate + UDP-N-acetyl-alpha-D-glucosamine = beta-D-GlcNAc-(1-&gt;4)-Mur2Ac(oyl-L-Ala-gamma-D-Glu-L-Lys-D-Ala-D-Ala)-di-trans,octa-cis-undecaprenyl diphosphate + UDP + H(+). The protein operates within cell wall biogenesis; peptidoglycan biosynthesis. Cell wall formation. Catalyzes the transfer of a GlcNAc subunit on undecaprenyl-pyrophosphoryl-MurNAc-pentapeptide (lipid intermediate I) to form undecaprenyl-pyrophosphoryl-MurNAc-(pentapeptide)GlcNAc (lipid intermediate II). The polypeptide is UDP-N-acetylglucosamine--N-acetylmuramyl-(pentapeptide) pyrophosphoryl-undecaprenol N-acetylglucosamine transferase (Staphylococcus aureus (strain bovine RF122 / ET3-1)).